A 127-amino-acid polypeptide reads, in one-letter code: Large ribosomal subunit protein bL20 (127 aa).

The protein belongs to the bacterial ribosomal protein bL20 family.

In terms of biological role, binds directly to 23S ribosomal RNA and is necessary for the in vitro assembly process of the 50S ribosomal subunit. It is not involved in the protein synthesizing functions of that subunit. This chain is Large ribosomal subunit protein bL20, found in Akkermansia muciniphila (strain ATCC BAA-835 / DSM 22959 / JCM 33894 / BCRC 81048 / CCUG 64013 / CIP 107961 / Muc).